A 150-amino-acid chain; its full sequence is Small ribosomal subunit protein eS6 (150 aa).

This sequence belongs to the eukaryotic ribosomal protein eS6 family.

The protein is Small ribosomal subunit protein eS6 of Caldivirga maquilingensis (strain ATCC 700844 / DSM 13496 / JCM 10307 / IC-167).